Reading from the N-terminus, the 96-residue chain is NADH-ubiquinone oxidoreductase chain 4L (96 aa).

3 helical membrane passes run 1 to 21 (MNPTTFIISFMIALSGLAFYQ), 24 to 44 (LLSLFLCLEGMALSVFCLMAI), and 57 to 77 (LPLIMLTFSVCEAGLSLVLLV).

This sequence belongs to the complex I subunit 4L family.

It is found in the mitochondrion membrane. The enzyme catalyses a ubiquinone + NADH + 5 H(+)(in) = a ubiquinol + NAD(+) + 4 H(+)(out). Its function is as follows. Core subunit of the mitochondrial membrane respiratory chain NADH dehydrogenase (Complex I) which catalyzes electron transfer from NADH through the respiratory chain, using ubiquinone as an electron acceptor. Part of the enzyme membrane arm which is embedded in the lipid bilayer and involved in proton translocation. In Myxine glutinosa (Atlantic hagfish), this protein is NADH-ubiquinone oxidoreductase chain 4L (MT-ND4L).